Here is a 701-residue protein sequence, read N- to C-terminus: DC-STAMP domain-containing protein 2 (701 aa).

4 consecutive transmembrane segments (helical) span residues 15 to 35 (TCGF…ELLG), 40 to 60 (PFGC…GMGF), 82 to 102 (LLLL…NTLQ), and 215 to 235 (FPHL…LASL). Residues Asn-272 and Asn-284 are each glycosylated (N-linked (GlcNAc...) asparagine). The next 2 helical transmembrane spans lie at 310–330 (ALSL…IQAL) and 404–424 (LLIM…LDLA). Residue Asn-468 is glycosylated (N-linked (GlcNAc...) asparagine). A helical membrane pass occupies residues 488–508 (YIVIGTMYGLCFFVTLFGSYV). The tract at residues 673–701 (LQEALGTNLSDKSTSKPERAGNRNQDRKQ) is disordered. A compositionally biased stretch (basic and acidic residues) spans 685-701 (STSKPERAGNRNQDRKQ).

Interacts with DCST1. In terms of tissue distribution, expressed in testis.

It is found in the cytoplasmic vesicle. It localises to the secretory vesicle. Its subcellular location is the acrosome membrane. Its function is as follows. Essential sperm cell-surface protein required for sperm-egg fusion and fertilization. The protein is DC-STAMP domain-containing protein 2 of Mus musculus (Mouse).